Here is a 138-residue protein sequence, read N- to C-terminus: Large ribosomal subunit protein uL16 (138 aa).

Residues 1 to 17 (MLIPRKVKHRKQHHPKQ) are compositionally biased toward basic residues. Residues 1 to 24 (MLIPRKVKHRKQHHPKQRGIASGG) form a disordered region.

The protein belongs to the universal ribosomal protein uL16 family. Part of the 50S ribosomal subunit.

Its function is as follows. Binds 23S rRNA and is also seen to make contacts with the A and possibly P site tRNAs. The sequence is that of Large ribosomal subunit protein uL16 from Mycolicibacterium vanbaalenii (strain DSM 7251 / JCM 13017 / BCRC 16820 / KCTC 9966 / NRRL B-24157 / PYR-1) (Mycobacterium vanbaalenii).